A 156-amino-acid polypeptide reads, in one-letter code: Small ribosomal subunit protein uS7 (156 aa).

It belongs to the universal ribosomal protein uS7 family. As to quaternary structure, part of the 30S ribosomal subunit. Contacts proteins S9 and S11.

Functionally, one of the primary rRNA binding proteins, it binds directly to 16S rRNA where it nucleates assembly of the head domain of the 30S subunit. Is located at the subunit interface close to the decoding center, probably blocks exit of the E-site tRNA. The polypeptide is Small ribosomal subunit protein uS7 (Vibrio campbellii (strain ATCC BAA-1116)).